A 214-amino-acid polypeptide reads, in one-letter code: MNLEKQLHDGLKAIPELSADTGHLCSRLLRYIELIAKWNSTHNLTSVRNPESMITRHMLDSLVILPHVSGPGIVDVGSGAGFPGIPVALARPEWQVTLVESNQKKAAFLLQAVLELGLPNISVKQGRVEKIKLENKVDTVVSRAFSSLERFMSLSKHLSENDSDHCRFIAMKGEFPDMELMQLSSEFVVEKIVAVTVPGLKAKRHLVVIRYQPG.

S-adenosyl-L-methionine is bound by residues Gly-77, Phe-82, 128–129 (VE), and Arg-143.

This sequence belongs to the methyltransferase superfamily. RNA methyltransferase RsmG family.

The protein resides in the cytoplasm. It catalyses the reaction guanosine(527) in 16S rRNA + S-adenosyl-L-methionine = N(7)-methylguanosine(527) in 16S rRNA + S-adenosyl-L-homocysteine. In terms of biological role, specifically methylates the N7 position of guanine in position 527 of 16S rRNA. The polypeptide is Ribosomal RNA small subunit methyltransferase G (Nitrosomonas europaea (strain ATCC 19718 / CIP 103999 / KCTC 2705 / NBRC 14298)).